Here is a 421-residue protein sequence, read N- to C-terminus: Tol-Pal system protein TolA (421 aa).

The Cytoplasmic segment spans residues 1-13 (MSKATEQNDKLKR). The chain crosses the membrane as a helical span at residues 14-34 (AIIISAVLHVILFAALIWSSF). Residues 35-421 (DENIEASAGG…FKNAPLDFKP (387 aa)) lie on the Periplasmic side of the membrane. A domain II (alpha-helical) region spans residues 48–310 (SSIDAVMVDS…LSSGKNAPKT (263 aa)). Residues 65–266 (KRMQSQESSA…KAAADKKAAA (202 aa)) form a disordered region. Composition is skewed to basic and acidic residues over residues 73 to 175 (SAKR…EAEA) and 206 to 266 (EARK…KAAA). Repeat copies occupy residues 224 to 229 (EKKAAA), 230 to 234 (EKAAA), 235 to 240 (DKKAAA), 241 to 245 (EKAAA), 246 to 250 (DKKAA), 251 to 255 (EKAAA), 256 to 260 (EKAAA), 261 to 266 (DKKAAA), 267 to 271 (EKAAA), 272 to 277 (DKKAAA), 278 to 282 (AKAAA), 283 to 287 (EKAAA), and 288 to 292 (AKAAA). The segment at 224 to 292 (EKKAAAEKAA…EKAAAAKAAA (69 aa)) is 13 X tandem repeats of [EDA]-K(1,2)-A(2,4). Positions 300-336 (ELSSGKNAPKTGGGAKGNNASPAGSGNTKNNGASGAD) are disordered. The tract at residues 311–421 (GGGAKGNNAS…FKNAPLDFKP (111 aa)) is domain III (functional). Polar residues predominate over residues 317–332 (NNASPAGSGNTKNNGA). A disulfide bond links Cys363 and Cys388.

It belongs to the TolA family. In terms of assembly, the Tol-Pal system is composed of five core proteins: the inner membrane proteins TolA, TolQ and TolR, the periplasmic protein TolB and the outer membrane protein Pal. They form a network linking the inner and outer membranes and the peptidoglycan layer. TolA interacts with TolQ and TolR via its N-terminal domain. Interacts with CpoB, and with the trimeric porins OmpC, OmpF, PhoE and LamB via its central domain. Interacts with TolB via its C-terminal domain. Also interacts with Pal via its C-terminal domain. This interaction is proton motive force dependent and requires TolQ and TolR.

It is found in the cell inner membrane. Its function is as follows. Part of the Tol-Pal system, which plays a role in outer membrane invagination during cell division and is important for maintaining outer membrane integrity. The Tol-Pal system is also required for polar localization of chemoreceptors clusters. The system also appears to be required for the activity of several outer membrane-localized enzymes with cell wall remodeling activity. Is involved in the uptake of group A colicins (colicins A, E1, E2, E3, and K) and in the uptake of filamentous phage DNA. In Escherichia coli (strain K12), this protein is Tol-Pal system protein TolA.